The primary structure comprises 104 residues: Protein RnfH (104 aa).

Belongs to the UPF0125 (RnfH) family.

This is Protein RnfH from Pseudomonas syringae pv. syringae (strain B728a).